Here is a 398-residue protein sequence, read N- to C-terminus: Phosphoglycerate kinase (398 aa).

Residues 21 to 23 (DFN), arginine 36, 59 to 62 (HLGR), arginine 119, and arginine 157 each bind substrate. Residues lysine 208, glycine 296, glutamate 327, and 354 to 357 (GGDS) contribute to the ATP site.

It belongs to the phosphoglycerate kinase family. Monomer.

Its subcellular location is the cytoplasm. It carries out the reaction (2R)-3-phosphoglycerate + ATP = (2R)-3-phospho-glyceroyl phosphate + ADP. It functions in the pathway carbohydrate degradation; glycolysis; pyruvate from D-glyceraldehyde 3-phosphate: step 2/5. This Streptococcus agalactiae serotype Ia (strain ATCC 27591 / A909 / CDC SS700) protein is Phosphoglycerate kinase.